A 252-amino-acid polypeptide reads, in one-letter code: Probable endonuclease 4 (252 aa).

His56, His96, Glu129, Asp162, His165, His191, Asp204, His206, and Glu233 together coordinate Zn(2+).

It belongs to the AP endonuclease 2 family. Zn(2+) serves as cofactor.

It carries out the reaction Endonucleolytic cleavage to 5'-phosphooligonucleotide end-products.. Its function is as follows. Endonuclease IV plays a role in DNA repair. It cleaves phosphodiester bonds at apurinic or apyrimidinic (AP) sites, generating a 3'-hydroxyl group and a 5'-terminal sugar phosphate. In Mycobacterium leprae (strain Br4923), this protein is Probable endonuclease 4.